Here is a 154-residue protein sequence, read N- to C-terminus: 6,7-dimethyl-8-ribityllumazine synthase (154 aa).

5-amino-6-(D-ribitylamino)uracil-binding positions include Phe-22, 56-58 (AFE), and 80-82 (AVI). Position 85 to 86 (85 to 86 (AT)) interacts with (2S)-2-hydroxy-3-oxobutyl phosphate. His-88 acts as the Proton donor in catalysis. Phe-113 serves as a coordination point for 5-amino-6-(D-ribitylamino)uracil. Residue Arg-127 coordinates (2S)-2-hydroxy-3-oxobutyl phosphate.

Belongs to the DMRL synthase family. Forms an icosahedral capsid composed of 60 subunits, arranged as a dodecamer of pentamers.

The enzyme catalyses (2S)-2-hydroxy-3-oxobutyl phosphate + 5-amino-6-(D-ribitylamino)uracil = 6,7-dimethyl-8-(1-D-ribityl)lumazine + phosphate + 2 H2O + H(+). Its pathway is cofactor biosynthesis; riboflavin biosynthesis; riboflavin from 2-hydroxy-3-oxobutyl phosphate and 5-amino-6-(D-ribitylamino)uracil: step 1/2. Its function is as follows. Catalyzes the formation of 6,7-dimethyl-8-ribityllumazine by condensation of 5-amino-6-(D-ribitylamino)uracil with 3,4-dihydroxy-2-butanone 4-phosphate. This is the penultimate step in the biosynthesis of riboflavin. The sequence is that of 6,7-dimethyl-8-ribityllumazine synthase from Anoxybacillus flavithermus (strain DSM 21510 / WK1).